Here is a 179-residue protein sequence, read N- to C-terminus: Interleukin-22b (179 aa).

An N-terminal signal peptide occupies residues 1–33 (MAVLQKSMSFSLMGTLAASCLLLIALWAQEANA). Cystine bridges form between Cys40–Cys132 and Cys89–Cys178. N-linked (GlcNAc...) asparagine glycans are attached at residues Asn54, Asn68, and Asn97.

Belongs to the IL-10 family.

The protein localises to the secreted. Functionally, cytokine that contributes to the inflammatory response in vivo. The protein is Interleukin-22b of Mus musculus (Mouse).